We begin with the raw amino-acid sequence, 503 residues long: Maturase K (503 aa).

This sequence belongs to the intron maturase 2 family. MatK subfamily.

Its subcellular location is the plastid. The protein localises to the chloroplast. Its function is as follows. Usually encoded in the trnK tRNA gene intron. Probably assists in splicing its own and other chloroplast group II introns. The polypeptide is Maturase K (Rubus ursinus (California blackberry)).